Consider the following 252-residue polypeptide: Isoprenyl transferase (252 aa).

Residue Asp32 is part of the active site. A Mg(2+)-binding site is contributed by Asp32. Substrate contacts are provided by residues Gly33–Arg36, Trp37, Arg45, His49, and Ser77–Glu79. Asn80 (proton acceptor) is an active-site residue. Residues Trp81, Arg83, Arg200, and Arg206–Ser208 contribute to the substrate site. Glu219 contacts Mg(2+).

The protein belongs to the UPP synthase family. As to quaternary structure, homodimer. Requires Mg(2+) as cofactor.

In terms of biological role, catalyzes the condensation of isopentenyl diphosphate (IPP) with allylic pyrophosphates generating different type of terpenoids. In Oceanobacillus iheyensis (strain DSM 14371 / CIP 107618 / JCM 11309 / KCTC 3954 / HTE831), this protein is Isoprenyl transferase.